Reading from the N-terminus, the 601-residue chain is Protein NRT1/ PTR FAMILY 4.4 (601 aa).

2 consecutive transmembrane segments (helical) span residues 44–64 (AALF…AVGN) and 82–102 (ANLV…GGFL). Threonine 112 carries the post-translational modification Phosphothreonine. Helical transmembrane passes span 113–133 (MLVF…QAHL), 160–180 (TLYT…PNII), 198–218 (FFNA…TLLV), 228–248 (VGFG…VAGT), 337–357 (ILLS…ILAQ), 386–406 (AIPY…FVPL), 420–440 (LQRI…AALV), 453–473 (VMLS…SEMF), 493–513 (FLTA…SVLV), and 544–564 (HFYW…LFWS).

This sequence belongs to the major facilitator superfamily. Proton-dependent oligopeptide transporter (POT/PTR) (TC 2.A.17) family. Expressed in shoots, roots and stems.

The protein localises to the membrane. This chain is Protein NRT1/ PTR FAMILY 4.4 (NPF4.4), found in Arabidopsis thaliana (Mouse-ear cress).